An 85-amino-acid chain; its full sequence is DNA-directed RNA polymerase subunit beta'' (85 aa).

It belongs to the RNA polymerase beta' chain family. RpoC2 subfamily. As to quaternary structure, in plastids the minimal PEP RNA polymerase catalytic core is composed of four subunits: alpha, beta, beta', and beta''. When a (nuclear-encoded) sigma factor is associated with the core the holoenzyme is formed, which can initiate transcription.

It is found in the plastid. Its subcellular location is the chloroplast. It catalyses the reaction RNA(n) + a ribonucleoside 5'-triphosphate = RNA(n+1) + diphosphate. DNA-dependent RNA polymerase catalyzes the transcription of DNA into RNA using the four ribonucleoside triphosphates as substrates. This chain is DNA-directed RNA polymerase subunit beta'' (rpoC2), found in Galdieria sulphuraria (Red alga).